Here is a 156-residue protein sequence, read N- to C-terminus: uncharacterized protein (156 aa).

The protein localises to the mitochondrion. This is an uncharacterized protein from Paramecium tetraurelia.